Here is a 268-residue protein sequence, read N- to C-terminus: Glutamine amidotransferase-like class 1 domain-containing protein 3, mitochondrial (268 aa).

A mitochondrion-targeting transit peptide spans 1-41; sequence MAAVRVLVASRLAAASAFTSLSPGGRTPSQRAALHLSVPRP. Residues Lys151, Lys157, and Lys164 each carry the N6-acetyllysine modification. An N6-acetyllysine; alternate modification is found at Lys203. Lys203 is modified (N6-succinyllysine; alternate). N6-acetyllysine is present on Lys219. N6-acetyllysine; alternate is present on residues Lys223 and Lys233. Residues Lys223 and Lys233 each carry the N6-succinyllysine; alternate modification.

This sequence belongs to the GATD3 family.

The protein resides in the mitochondrion. In Homo sapiens (Human), this protein is Glutamine amidotransferase-like class 1 domain-containing protein 3, mitochondrial.